The sequence spans 692 residues: Protein arginine N-methyltransferase 7 (692 aa).

2 consecutive SAM-dependent MTase PRMT-type domains span residues 14–345 and 358–684; these read SLEW…YCVW and SAYQ…ITME. The residue at position 32 (arginine 32) is an Omega-N-methylarginine. Residues glutamate 144 and glutamate 153 contribute to the active site.

Belongs to the class I-like SAM-binding methyltransferase superfamily. Protein arginine N-methyltransferase family. PRMT7 subfamily. Homodimer and heterodimer. Interacts with PRMT5 and SNRPD3. Interacts with CTCFL.

It localises to the cytoplasm. The protein localises to the cytosol. The protein resides in the nucleus. The catalysed reaction is L-arginyl-[protein] + S-adenosyl-L-methionine = N(omega)-methyl-L-arginyl-[protein] + S-adenosyl-L-homocysteine + H(+). Functionally, arginine methyltransferase that can both catalyze the formation of omega-N monomethylarginine (MMA) and symmetrical dimethylarginine (sDMA), with a preference for the formation of MMA. Specifically mediates the symmetrical dimethylation of arginine residues in the small nuclear ribonucleoproteins Sm D1 (SNRPD1) and Sm D3 (SNRPD3); such methylation being required for the assembly and biogenesis of snRNP core particles. Specifically mediates the symmetric dimethylation of histone H4 'Arg-3' to form H4R3me2s. Plays a role in gene imprinting by being recruited by CTCFL at the H19 imprinted control region (ICR) and methylating histone H4 to form H4R3me2s, possibly leading to recruit DNA methyltransferases at these sites. May also play a role in embryonic stem cell (ESC) pluripotency. Also able to mediate the arginine methylation of histone H2A and myelin basic protein (MBP) in vitro; the relevance of such results is however unclear in vivo. The chain is Protein arginine N-methyltransferase 7 (Prmt7) from Mus musculus (Mouse).